The sequence spans 315 residues: Three-prime repair exonuclease 1 (315 aa).

Mg(2+)-binding residues include Asp18 and Glu20. Residue 20–21 participates in substrate binding; the sequence is EA. A Phosphoserine modification is found at Ser78. Tyr129 is a substrate binding site. The residue at position 167 (Ser167) is a Phosphoserine. The active-site Proton donor/acceptor is the His195. Asp200 serves as a coordination point for Mg(2+). Asp200 lines the substrate pocket. The tract at residues 236 to 315 is necessary for endoplasmic reticulum localization; that stretch reads TTSTGTNPRP…YGLSLAMPGQ (80 aa). Positions 243 to 315 are interaction with UBQLN1; sequence PRPSAVTATV…YGLSLAMPGQ (73 aa). Positions 256-282 are disordered; that stretch reads RASDTGPNLRGDRSPKPAPSPKMCPGA. A compositionally biased stretch (pro residues) spans 271–282; the sequence is KPAPSPKMCPGA. The interval 282–315 is necessary for cytoplasmic retention; the sequence is APPGEGLLAPLGLLAFLTLAVAMLYGLSLAMPGQ.

The protein belongs to the exonuclease superfamily. TREX family. As to quaternary structure, homodimer. Interacts (via proline-rich region) with TCERG1/CA150 (via the second WW domain). Component of the SET complex, composed of at least ANP32A, APEX1, HMGB2, NME1, SET and TREX1. Within this complex, directly interacts with SET; this interaction does not result in TREX1 inhibition. Also interacts with NME1, but only following translocation to the nucleus. Directly interacts with UBQLN1 (via ubiquitin-like domain); the interaction may control TREX1 subcellular location. Requires Mg(2+) as cofactor. Post-translationally, ubiquitinated, but not targeted to proteasomal degradation. Ubiquitination may be important for interaction with UBQLN1.

Its subcellular location is the nucleus. The protein localises to the cytoplasm. It is found in the cytosol. It localises to the endoplasmic reticulum membrane. The enzyme catalyses Exonucleolytic cleavage in the 3'- to 5'-direction to yield nucleoside 5'-phosphates.. Functionally, major cellular 3'-to-5' DNA exonuclease which digests single-stranded DNA (ssDNA) and double-stranded DNA (dsDNA) with mismatched 3' termini. Prevents cell-intrinsic initiation of autoimmunity. Acts by metabolizing DNA fragments from endogenous retroelements, including L1, LTR and SINE elements. Plays a key role in degradation of DNA fragments at cytosolic micronuclei arising from genome instability: its association with the endoplasmic reticulum membrane directs TREX1 to ruptured micronuclei, leading to micronuclear DNA degradation. Micronuclear DNA degradation is required to limit CGAS activation and subsequent inflammation. Unless degraded, these DNA fragments accumulate in the cytosol and activate the cGAS-STING innate immune signaling, leading to the production of type I interferon. Prevents chronic ATM-dependent checkpoint activation, by processing ssDNA polynucleotide species arising from the processing of aberrant DNA replication intermediates. Inefficiently degrades oxidized DNA, such as that generated upon antimicrobial reactive oxygen production or upon absorption of UV light. During GZMA-mediated cell death, contributes to DNA damage in concert with NME1. NME1 nicks one strand of DNA and TREX1 removes bases from the free 3' end to enhance DNA damage and prevent DNA end reannealing and rapid repair. The chain is Three-prime repair exonuclease 1 from Bos taurus (Bovine).